A 382-amino-acid chain; its full sequence is S-adenosylmethionine synthase (382 aa).

H15 is an ATP binding site. D17 contacts Mg(2+). Position 43 (E43) interacts with K(+). L-methionine contacts are provided by E56 and Q99. Residues 99–109 (QSPDINQGVDR) are flexible loop. ATP contacts are provided by residues 164–166 (DAK), 230–231 (RF), D239, 245–246 (RK), A262, and K266. D239 lines the L-methionine pocket. K270 contributes to the L-methionine binding site.

It belongs to the AdoMet synthase family. Homotetramer; dimer of dimers. Mg(2+) is required as a cofactor. K(+) serves as cofactor.

It localises to the cytoplasm. The catalysed reaction is L-methionine + ATP + H2O = S-adenosyl-L-methionine + phosphate + diphosphate. It functions in the pathway amino-acid biosynthesis; S-adenosyl-L-methionine biosynthesis; S-adenosyl-L-methionine from L-methionine: step 1/1. Functionally, catalyzes the formation of S-adenosylmethionine (AdoMet) from methionine and ATP. The overall synthetic reaction is composed of two sequential steps, AdoMet formation and the subsequent tripolyphosphate hydrolysis which occurs prior to release of AdoMet from the enzyme. The polypeptide is S-adenosylmethionine synthase (Glaesserella parasuis serovar 5 (strain SH0165) (Haemophilus parasuis)).